The primary structure comprises 665 residues: Fermitin family homolog 3 (665 aa).

At Tyr-11 the chain carries Phosphotyrosine. Positions 229 to 556 (WLDSSRCLMQ…SLPDFGISYV (328 aa)) constitute an FERM domain. The PH domain maps to 354–453 (DHLRIFRPRK…WMAGCRLASK (100 aa)). A Phosphotyrosine modification is found at Tyr-502. Phosphothreonine is present on Thr-589.

It belongs to the kindlin family. As to quaternary structure, interacts with ITGB1, ITGB2 and ITGB3 (via cytoplasmic tails).

It is found in the cell projection. The protein localises to the podosome. In terms of biological role, plays a central role in cell adhesion in hematopoietic cells. Acts by activating the integrin beta-1-3 (ITGB1, ITGB2 and ITGB3). Required for integrin-mediated platelet adhesion and leukocyte adhesion to endothelial cells. Required for activation of integrin beta-2 (ITGB2) in polymorphonuclear granulocytes (PMNs). In Bos taurus (Bovine), this protein is Fermitin family homolog 3 (FERMT3).